A 352-amino-acid polypeptide reads, in one-letter code: Holliday junction branch migration complex subunit RuvB (352 aa).

A large ATPase domain (RuvB-L) region spans residues 4-185; it reads PDRLISAVSG…FGIVQRLEFY (182 aa). Residues Ile-24, Arg-25, Gly-66, Lys-69, Thr-70, Thr-71, 132–134, Arg-175, Tyr-185, and Arg-222 contribute to the ATP site; that span reads EDF. Thr-70 is a Mg(2+) binding site. Residues 186–256 are small ATPAse domain (RuvB-S); that stretch reads NVEDLATIVS…IADKALNLLD (71 aa). A head domain (RuvB-H) region spans residues 259 to 352; the sequence is ERGFDHLDRR…SDLFTSEDGN (94 aa). Arg-295, Arg-314, and Arg-319 together coordinate DNA.

This sequence belongs to the RuvB family. In terms of assembly, homohexamer. Forms an RuvA(8)-RuvB(12)-Holliday junction (HJ) complex. HJ DNA is sandwiched between 2 RuvA tetramers; dsDNA enters through RuvA and exits via RuvB. An RuvB hexamer assembles on each DNA strand where it exits the tetramer. Each RuvB hexamer is contacted by two RuvA subunits (via domain III) on 2 adjacent RuvB subunits; this complex drives branch migration. In the full resolvosome a probable DNA-RuvA(4)-RuvB(12)-RuvC(2) complex forms which resolves the HJ.

It localises to the cytoplasm. The catalysed reaction is ATP + H2O = ADP + phosphate + H(+). The RuvA-RuvB-RuvC complex processes Holliday junction (HJ) DNA during genetic recombination and DNA repair, while the RuvA-RuvB complex plays an important role in the rescue of blocked DNA replication forks via replication fork reversal (RFR). RuvA specifically binds to HJ cruciform DNA, conferring on it an open structure. The RuvB hexamer acts as an ATP-dependent pump, pulling dsDNA into and through the RuvAB complex. RuvB forms 2 homohexamers on either side of HJ DNA bound by 1 or 2 RuvA tetramers; 4 subunits per hexamer contact DNA at a time. Coordinated motions by a converter formed by DNA-disengaged RuvB subunits stimulates ATP hydrolysis and nucleotide exchange. Immobilization of the converter enables RuvB to convert the ATP-contained energy into a lever motion, pulling 2 nucleotides of DNA out of the RuvA tetramer per ATP hydrolyzed, thus driving DNA branch migration. The RuvB motors rotate together with the DNA substrate, which together with the progressing nucleotide cycle form the mechanistic basis for DNA recombination by continuous HJ branch migration. Branch migration allows RuvC to scan DNA until it finds its consensus sequence, where it cleaves and resolves cruciform DNA. The sequence is that of Holliday junction branch migration complex subunit RuvB from Pseudomonas paraeruginosa (strain DSM 24068 / PA7) (Pseudomonas aeruginosa (strain PA7)).